The primary structure comprises 270 residues: NAD kinase (270 aa).

Residue aspartate 49 is the Proton acceptor of the active site. Residues 49–50 (DG), arginine 54, 126–127 (NE), arginine 152, aspartate 154, 165–170 (TAYNKS), alanine 189, and glutamine 227 each bind NAD(+).

The protein belongs to the NAD kinase family. Requires a divalent metal cation as cofactor.

It is found in the cytoplasm. It carries out the reaction NAD(+) + ATP = ADP + NADP(+) + H(+). In terms of biological role, involved in the regulation of the intracellular balance of NAD and NADP, and is a key enzyme in the biosynthesis of NADP. Catalyzes specifically the phosphorylation on 2'-hydroxyl of the adenosine moiety of NAD to yield NADP. The polypeptide is NAD kinase (Lactococcus lactis subsp. cremoris (strain MG1363)).